A 254-amino-acid chain; its full sequence is MAGHSKWANIKRQKARVDAKKGAVFARLSRAIIVAARHGIPDPEGNFQLRSAIEKAKAAGIPNDNIERAIAKGAGKLGADSELEEIRYEGYGLGGVAILIEAMTDNRNRTAADLRAAFNKHGGNLGETGCVGWMFNQVGIVTIAAPADEEAFLEVLLEAGADTYELIETEEGTIAEIVTEVTNLEHLATVLKAQHYPVREAESRWVAINMVEISDPEQGRRLLKLMDALEDLDDVQSVTANFAIGDNLLTEMLV.

The protein belongs to the TACO1 family.

It localises to the cytoplasm. The protein is Probable transcriptional regulatory protein Cyan7425_4347 of Cyanothece sp. (strain PCC 7425 / ATCC 29141).